Consider the following 43-residue polypeptide: MEPTFSLIVAIAAVTICITAFAIYTAFGPPSKDLQDPYEMHED.

Residues 7-27 (LIVAIAAVTICITAFAIYTAF) form a helical membrane-spanning segment.

The protein belongs to the PsbN family.

The protein resides in the cellular thylakoid membrane. Functionally, may play a role in photosystem I and II biogenesis. The sequence is that of Protein PsbN from Synechococcus sp. (strain JA-2-3B'a(2-13)) (Cyanobacteria bacterium Yellowstone B-Prime).